The following is a 291-amino-acid chain: MSKSWGKFIEEEEAEMASRRNLMIVDGTNLGFRFKHNNSKKPFASSYVSTIQSLAKSYSARTTIVLGDKGKSVFRLEHLPEYKGNRDEKYAQRTEEEKALDEQFFEYLKDAFELCKTTFPTFTIRGVEADDMAAYIVKLIGHLYDHVWLISTDGDWDTLLTDKVSRFSFTTRREYHLRDMYEHHNVDDVEQFISLKAIMGDLGDNIRGVEGIGAKRGYNIIREFGNVLDIIDQLPLPGKQKYIQNLNASEELLFRNLILVDLPTYCVDAIAAVGQDVLDKFTKDILEIAEQ.

The segment at 82 to 116 is helical arch; the sequence is YKGNRDEKYAQRTEEEKALDEQFFEYLKDAFELCK. Lys-83 contributes to the DNA binding site. Mg(2+) contacts are provided by Asp-130, Asp-153, Asp-155, and Asp-201. Positions 188–224 are DNA-binding; H3TH; that stretch reads DVEQFISLKAIMGDLGDNIRGVEGIGAKRGYNIIREF. The 74-residue stretch at 190 to 263 folds into the 5'-3' exonuclease domain; sequence EQFISLKAIM…FRNLILVDLP (74 aa). Residues Val-209 and Ile-212 each coordinate K(+).

Mg(2+) serves as cofactor. Requires K(+) as cofactor.

The catalysed reaction is Exonucleolytic cleavage in the 5'- to 3'-direction to yield nucleoside 5'-phosphates.. With respect to regulation, inhibited by p-hydroxymercuribenzoate (PHMB). In terms of biological role, catalyzes both the 5'-exonucleolytic and structure-specific endonucleolytic hydrolysis of DNA branched nucleic acid molecules and probably plays a role in viral genome replication. Active on flap (branched duplex DNA containing a free single-stranded 5'-end), 5'overhangs and pseudo-Y structures. The substrates require a free, single-stranded 5' end, with endonucleolytic hydrolysis occurring at the junction of double- and single-stranded DNA. This function may be used for example to trim such branched molecules generated by Okazaki fragments synthesis during replication. The chain is Flap endonuclease (D15) from Escherichia phage T5 (Enterobacteria phage T5).